The chain runs to 416 residues: Gamma-glutamyl phosphate reductase (416 aa).

Belongs to the gamma-glutamyl phosphate reductase family.

The protein localises to the cytoplasm. The enzyme catalyses L-glutamate 5-semialdehyde + phosphate + NADP(+) = L-glutamyl 5-phosphate + NADPH + H(+). The protein operates within amino-acid biosynthesis; L-proline biosynthesis; L-glutamate 5-semialdehyde from L-glutamate: step 2/2. In terms of biological role, catalyzes the NADPH-dependent reduction of L-glutamate 5-phosphate into L-glutamate 5-semialdehyde and phosphate. The product spontaneously undergoes cyclization to form 1-pyrroline-5-carboxylate. This chain is Gamma-glutamyl phosphate reductase, found in Streptococcus pyogenes serotype M1.